The chain runs to 211 residues: Small ribosomal subunit protein uS3 (211 aa).

The KH type-2 domain maps to 16-85 (IDEYFKTKLV…NPQIEVKQVE (70 aa)).

Belongs to the universal ribosomal protein uS3 family. In terms of assembly, part of the 30S ribosomal subunit.

In terms of biological role, binds the lower part of the 30S subunit head. The polypeptide is Small ribosomal subunit protein uS3 (Methanococcus maripaludis (strain DSM 14266 / JCM 13030 / NBRC 101832 / S2 / LL)).